Reading from the N-terminus, the 229-residue chain is Ribonuclease 3 (229 aa).

One can recognise an RNase III domain in the interval 5-127; it reads LDRLERKLGY…LIGAIYLDTG (123 aa). E40 provides a ligand contact to Mg(2+). The active site involves D44. D113 and E116 together coordinate Mg(2+). Residue E116 is part of the active site. Positions 154–224 constitute a DRBM domain; the sequence is DPKTRLQEFL…AAAALVALGV (71 aa).

The protein belongs to the ribonuclease III family. In terms of assembly, homodimer. Mg(2+) is required as a cofactor.

It localises to the cytoplasm. It catalyses the reaction Endonucleolytic cleavage to 5'-phosphomonoester.. Functionally, digests double-stranded RNA. Involved in the processing of primary rRNA transcript to yield the immediate precursors to the large and small rRNAs (23S and 16S). Processes some mRNAs, and tRNAs when they are encoded in the rRNA operon. Processes pre-crRNA and tracrRNA of type II CRISPR loci if present in the organism. In Pseudomonas aeruginosa (strain LESB58), this protein is Ribonuclease 3.